Consider the following 420-residue polypeptide: Serine--tRNA ligase (420 aa).

Residue 229-231 (TAE) coordinates L-serine. An ATP-binding site is contributed by 260-262 (RSE). An L-serine-binding site is contributed by glutamate 283. 347 to 350 (EISS) contributes to the ATP binding site. Serine 381 contributes to the L-serine binding site.

It belongs to the class-II aminoacyl-tRNA synthetase family. Type-1 seryl-tRNA synthetase subfamily. Homodimer. The tRNA molecule binds across the dimer.

Its subcellular location is the cytoplasm. The enzyme catalyses tRNA(Ser) + L-serine + ATP = L-seryl-tRNA(Ser) + AMP + diphosphate + H(+). The catalysed reaction is tRNA(Sec) + L-serine + ATP = L-seryl-tRNA(Sec) + AMP + diphosphate + H(+). It participates in aminoacyl-tRNA biosynthesis; selenocysteinyl-tRNA(Sec) biosynthesis; L-seryl-tRNA(Sec) from L-serine and tRNA(Sec): step 1/1. Catalyzes the attachment of serine to tRNA(Ser). Is also able to aminoacylate tRNA(Sec) with serine, to form the misacylated tRNA L-seryl-tRNA(Sec), which will be further converted into selenocysteinyl-tRNA(Sec). In Gluconobacter oxydans (strain 621H) (Gluconobacter suboxydans), this protein is Serine--tRNA ligase.